Reading from the N-terminus, the 60-residue chain is Large ribosomal subunit protein bL32 (60 aa).

Belongs to the bacterial ribosomal protein bL32 family.

This chain is Large ribosomal subunit protein bL32, found in Oenococcus oeni (strain ATCC BAA-331 / PSU-1).